Consider the following 249-residue polypeptide: Cobalt transport protein CbiM (249 aa).

The signal sequence occupies residues 1–27 (MKPLHRWLPVVIGAALLIIFESRAAYA). The next 6 helical transmembrane spans lie at 33–53 (GFLP…FWVL), 70–90 (LLLG…IPSV), 102–122 (LGTI…VLLF), 134–154 (TLGA…WLIW), 161–181 (APIW…TYVV), and 207–227 (IFAV…VLIF).

This sequence belongs to the CbiM family. In terms of assembly, forms an energy-coupling factor (ECF) transporter complex composed of an ATP-binding protein (A component, CbiO), a transmembrane protein (T component, CbiQ) and 2 possible substrate-capture proteins (S components, CbiM and CbiN) of unknown stoichimetry.

It localises to the cell membrane. Its pathway is cofactor biosynthesis; adenosylcobalamin biosynthesis. Part of the energy-coupling factor (ECF) transporter complex CbiMNOQ involved in cobalt import. The protein is Cobalt transport protein CbiM of Roseiflexus sp. (strain RS-1).